The sequence spans 76 residues: Esculentin-2-ALa (76 aa).

The N-terminal stretch at Met-1–Cys-22 is a signal peptide. A propeptide spanning residues Glu-23–Arg-39 is cleaved from the precursor. Residues Cys-70 and Cys-76 are joined by a disulfide bond.

Expressed by the skin glands.

It localises to the secreted. Antimicrobial peptide with activity against Gram-positive and Gram-negative bacteria and against fungi. Has been tested against S.aureus (MIC=2.5 ug/mL), B.pumilus (MIC=2.5 ug/mL), B.cereus (MIC=7.5 ug/mL), E.coli (MIC=12.5 ug/mL), B.dysenteriae (MIC=7.5 ug/mL), A.cacoaceticus (MIC=25.0 ug/mL), P.aeruginosa (MIC=50.0 ug/mL) and C.albicans (MIC=2.5 ug/mL). Also shows a weak hemolytic activity. In Amolops loloensis (Lolokou Sucker Frog), this protein is Esculentin-2-ALa.